The chain runs to 453 residues: ATP-dependent RNA helicase dbp8 (453 aa).

Positions 7-35 (KSFSDLGISPWLIDTLKALAIYEPTDIQE) match the Q motif motif. The region spanning 38-214 (IAQILEGRNC…YQPQKNNKPP (177 aa)) is the Helicase ATP-binding domain. 51 to 58 (AKTGSGKT) provides a ligand contact to ATP. The DEAD box signature appears at 160-163 (DEAD). The Helicase C-terminal domain maps to 230–393 (TLQQSYIFVS…YEHVSENKML (164 aa)). Residues 413-453 (RGFGERRQKRNEKRLMANGISNKLKNSGRKKKAKNTLSTEK) are disordered.

This sequence belongs to the DEAD box helicase family. DDX49/DBP8 subfamily.

It is found in the nucleus. The protein resides in the nucleolus. It catalyses the reaction ATP + H2O = ADP + phosphate + H(+). ATP-binding RNA helicase involved in 40S ribosomal subunit biogenesis and is required for the normal formation of 18S rRNAs through pre-rRNA processing at A0, A1 and A2 sites. Required for vegetative growth. This is ATP-dependent RNA helicase dbp8 (dbp8) from Schizosaccharomyces pombe (strain 972 / ATCC 24843) (Fission yeast).